A 561-amino-acid chain; its full sequence is DNA ligase B (561 aa).

Residue lysine 125 is the N6-AMP-lysine intermediate of the active site.

Belongs to the NAD-dependent DNA ligase family. LigB subfamily.

It catalyses the reaction NAD(+) + (deoxyribonucleotide)n-3'-hydroxyl + 5'-phospho-(deoxyribonucleotide)m = (deoxyribonucleotide)n+m + AMP + beta-nicotinamide D-nucleotide.. In terms of biological role, catalyzes the formation of phosphodiester linkages between 5'-phosphoryl and 3'-hydroxyl groups in double-stranded DNA using NAD as a coenzyme and as the energy source for the reaction. This Salmonella gallinarum (strain 287/91 / NCTC 13346) protein is DNA ligase B.